A 224-amino-acid chain; its full sequence is ATP phosphoribosyltransferase (224 aa).

Belongs to the ATP phosphoribosyltransferase family. Short subfamily. As to quaternary structure, heteromultimer composed of HisG and HisZ subunits.

It localises to the cytoplasm. It carries out the reaction 1-(5-phospho-beta-D-ribosyl)-ATP + diphosphate = 5-phospho-alpha-D-ribose 1-diphosphate + ATP. It participates in amino-acid biosynthesis; L-histidine biosynthesis; L-histidine from 5-phospho-alpha-D-ribose 1-diphosphate: step 1/9. Its function is as follows. Catalyzes the condensation of ATP and 5-phosphoribose 1-diphosphate to form N'-(5'-phosphoribosyl)-ATP (PR-ATP). Has a crucial role in the pathway because the rate of histidine biosynthesis seems to be controlled primarily by regulation of HisG enzymatic activity. This is ATP phosphoribosyltransferase from Cupriavidus metallidurans (strain ATCC 43123 / DSM 2839 / NBRC 102507 / CH34) (Ralstonia metallidurans).